Consider the following 561-residue polypeptide: MSTSWSDRLQNAADMPANMDKHALKKYRREAYHRVFVNRSLAMEKIKCFGFDMDYTLAVYKSPEYESLGFELTVERLVSIGYPQELLSFAYDSTFPTRGLVFDTLYGNLLKVDAYGNLLVCAHGFNFIRGPETREQYPNKFIQRDDTERFYILNTLFNLPETYLLACLVDFFTNCPRYTSCETGFKDGDLFMSYRSMFQDVRDAVDWVHYKGSLKEKTVENLEKYVVKDGKLPLLLSRMKEVGKVFLATNSDYKYTDKIMTYLFDFPHGPKPGSSHRPWQSYFDLILVDARKPLFFGEGTVLRQVDTKTGKLKIGTYTGPLQHGIVYSGGSSDTICDLLGAKGKDILYIGDHIFGDILKSKKRQGWRTFLVIPELAQELHVWTDKSSLFEELQSLDIFLAELYKHLDSSSNERPDISSIQRRIKKVTHDMDMCYGMMGSLFRSGSRQTLFASQVMRYADLYAASFINLLYYPFSYLFRAAHVLMPHESTVEHTHVDINEMESPLATRNRTSVDFKDTDYKRHQLTRSISEIKPPNLFPLAPQEITHCHDEDDDEEEEEEEE.

The active-site Nucleophile is the D52. Positions 52 and 54 each coordinate GMP. Residues D52 and D54 each contribute to the IMP site. D52 and D54 together coordinate Mg(2+). Residue D54 is the Proton donor of the active site. Residue R144 coordinates (2R)-2,3-bisphosphoglycerate. Residues R144 and N154 each coordinate ATP. DATP contacts are provided by R144 and N154. N154 lines the adenosine pocket. Residue N154 coordinates P(1),P(4)-bis(5'-adenosyl) tetraphosphate. Residues R202, D206, K215, T249, and N250 each contribute to the GMP site. The IMP site is built by R202, D206, K215, T249, N250, S251, and K292. Residue K292 participates in GMP binding. D351 lines the Mg(2+) pocket. Position 362 (K362) interacts with (2R)-2,3-bisphosphoglycerate. K362 lines the P(1),P(4)-bis(5'-adenosyl) tetraphosphate pocket. S418 carries the post-translational modification Phosphoserine. Adenosine is bound by residues M436 and Q453. Residues Q453 and R456 each contribute to the ATP site. Positions 453 and 456 each coordinate dATP. Q453 contributes to the P(1),P(4)-bis(5'-adenosyl) tetraphosphate binding site. Y457 contacts (2R)-2,3-bisphosphoglycerate. Y457 is a binding site for P(1),P(4)-bis(5'-adenosyl) tetraphosphate. Phosphoserine is present on residues S502, S511, and S527. The interval 538-561 (PLAPQEITHCHDEDDDEEEEEEEE) is disordered. The tract at residues 548-561 (HDEDDDEEEEEEEE) is required for tetramer assembly. Acidic residues predominate over residues 550–561 (EDDDEEEEEEEE).

This sequence belongs to the 5'(3')-deoxyribonucleotidase family. In terms of assembly, homotetramer. Mg(2+) serves as cofactor. In terms of tissue distribution, widely expressed.

It is found in the cytoplasm. The protein resides in the cytosol. The enzyme catalyses a ribonucleoside 5'-phosphate + H2O = a ribonucleoside + phosphate. It carries out the reaction a 2'-deoxyribonucleoside + a ribonucleoside 5'-phosphate = a ribonucleoside + a 2'-deoxyribonucleoside 5'-phosphate. It catalyses the reaction IMP + H2O = inosine + phosphate. The catalysed reaction is GMP + H2O = guanosine + phosphate. The enzyme catalyses dIMP + H2O = 2'-deoxyinosine + phosphate. It carries out the reaction dGMP + H2O = 2'-deoxyguanosine + phosphate. It catalyses the reaction XMP + H2O = xanthosine + phosphate. The catalysed reaction is inosine + GMP = guanosine + IMP. The enzyme catalyses dGMP + inosine = 2'-deoxyguanosine + IMP. It carries out the reaction dIMP + inosine = 2'-deoxyinosine + IMP. It catalyses the reaction inosine + UMP = uridine + IMP. The catalysed reaction is inosine + CMP = cytidine + IMP. The enzyme catalyses inosine + AMP = IMP + adenosine. With respect to regulation, allosterically activated by various compounds including ATP, 2,3-BPG/2,3-Bisphosphoglyceric acid and Ap4A/P1,P4-bis(5'-adenosyl) tetraphosphate. Binding of an allosteric activator is a prerequisiste to magnesium and substrate binding. Inhibited by inorganic phosphate. Its function is as follows. Broad specificity cytosolic 5'-nucleotidase that catalyzes the dephosphorylation of 6-hydroxypurine nucleoside 5'-monophosphates. In addition, possesses a phosphotransferase activity by which it can transfer a phosphate from a donor nucleoside monophosphate to an acceptor nucleoside, preferably inosine, deoxyinosine and guanosine. Has the highest activities for IMP and GMP followed by dIMP, dGMP and XMP. Could also catalyze the transfer of phosphates from pyrimidine monophosphates but with lower efficiency. Through these activities regulates the purine nucleoside/nucleotide pools within the cell. The polypeptide is Cytosolic purine 5'-nucleotidase (Homo sapiens (Human)).